The primary structure comprises 530 residues: Cytochrome P450 monooxygenase aneG (530 aa).

Residue Asn-2 is glycosylated (N-linked (GlcNAc...) asparagine). A helical membrane pass occupies residues 43-63 (WLSILGFTIGCYYVIYTFYAL). N-linked (GlcNAc...) asparagine glycosylation occurs at Asn-92. Cys-474 serves as a coordination point for heme.

The protein belongs to the cytochrome P450 family. Requires heme as cofactor.

The protein localises to the membrane. It catalyses the reaction asperaculane E + reduced [NADPH--hemoprotein reductase] + O2 = asperaculane G + oxidized [NADPH--hemoprotein reductase] + H2O + H(+). The catalysed reaction is asperaculane G + reduced [NADPH--hemoprotein reductase] + O2 = aculene D + oxidized [NADPH--hemoprotein reductase] + CO2 + 2 H2O. It carries out the reaction asperaculane E + 2 reduced [NADPH--hemoprotein reductase] + 2 O2 = aculene D + 2 oxidized [NADPH--hemoprotein reductase] + CO2 + 3 H2O + H(+). It functions in the pathway secondary metabolite biosynthesis. Its function is as follows. Cytochrome P450 monooxygenase; part of the gene cluster that mediates the biosynthesis of aculenes, a unique type of norsesquiterpenes that contain a nordaucane skeleton linked to an L-proline moiety and are of mixed biosynthetic origin. The pathway begins with the synthesis of dauca-4,7-diene by the terpene cyclase aneC using farnesyl pyrophosphate (FPP) as substrate. The cytochrome P450 monooxygenase aneF then performs the initial oxidation at C-12 of dauca-4,7-diene to yield asperaculane D. Asperaculane D is substrate of the cytochrome P450 monooxygenase aneD for C-10 hydroxylation to yield asperaculane E. The cytochrome P450 monooxygenase aneG then converts asperaculane E into aculene D via C-2 oxidation. The monomodular nonribosomal peptide synthtase aneB adenylates L-proline and the thiohydrolase aneE transfers this activated L-proline derivative to aculenes D and C to produce respectively aculenes B and A. The dioxygenase aneA converts aculene D into aculene C, and aculene B into aculene A by introducing the 5,6-alkene moiety. Asperculanes A, B, C and F, as well as 14-prolyl asperculane C, might be shunt products of the pathway. The polypeptide is Cytochrome P450 monooxygenase aneG (Aspergillus aculeatus (strain ATCC 16872 / CBS 172.66 / WB 5094)).